Consider the following 364-residue polypeptide: MEASAAKITPMASSMSASGSTNSPSSEKMNYALQVALQTIKERCIQLQRRVASMEEENQQLREASSRSEGAPRANEIGVTGDVLSLKAQVSELQRQKEQLEEHIGMVSNENRRLWSRLSQISKDQQLNALPSSTDSRAQQNQNLVRSKTFTQHSPNPHLRQKMLSDGIKDLSLEEIALDDFGASSEELGYPYNLQKVEETTSEPDANVDAKRCLDGLQELRREAMKQQQELRSVMTLLENRIALKPCPECAQKTIKKPEMADKSLETDDSLTSELKNYESQHNGHNGTPPSQRINIIQEKIKADAADAMEKTCPMCGKQYSSQVSFNAFREHVEMHFIDDALELESENSIERQFEFVSHAVGDF.

Residues 1-26 (MEASAAKITPMASSMSASGSTNSPSS) form a disordered region. Positions 9 to 26 (TPMASSMSASGSTNSPSS) are enriched in low complexity. The stretch at 32–114 (ALQVALQTIK…GMVSNENRRL (83 aa)) forms a coiled coil. A Phosphoserine modification is found at Ser53. Residues 56 to 75 (EENQQLREASSRSEGAPRAN) are disordered. Phosphoserine occurs at positions 85, 172, and 202. Residues 210 to 243 (AKRCLDGLQELRREAMKQQQELRSVMTLLENRIA) adopt a coiled-coil conformation. Residues Ser264 and Ser270 each carry the phosphoserine modification. The UBZ1-type zinc finger occupies 310–336 (EKTCPMCGKQYSSQVSFNAFREHVEMH). Zn(2+) is bound by residues Cys313 and Cys316. Ser325 is subject to Phosphoserine. His332 and His336 together coordinate Zn(2+). The residue at position 349 (Ser349) is a Phosphoserine.

In terms of assembly, forms homooligomers. Interacts with the dynein light chain ctp. Interacts (via C-terminus) with IKKepsilon; this leads to phosphorylation of spn-F. Forms ternary complexes with ctp and IKKepsilon; this is required for spn-F redistribution from puncta in larval neurons and for dendrite pruning. Interacts with ctp and IKKepsilon through distinct regions. Interacts (via C-terminus) with jvl. In terms of processing, phosphorylated by IKKepsilon. Phosphorylation is required for spn-F neuronal distribution and dendrite pruning and reduces spn-F homooligomerization. It does not lead to spn-F degradation. In pupal bristles, localizes to the bristle tip throughout the elongation period (at protein level).

It localises to the cytoplasm. The protein localises to the cytoskeleton. Its subcellular location is the cell projection. It is found in the axon. The protein resides in the dendrite. It localises to the perikaryon. Its function is as follows. Plays a role in oocyte axis determination and microtubule organization during oogenesis. Also required for polarized organization of the bristle. Required, with jvl, for activation of the kinase IKKepsilon in the germ line. Also required for localization of IKKepsilon to the distal tip of elongating bristles by acting as an adapter linking IKKepsilon and cytoplasmic dynein. Involved in dendrite pruning in larval sensory neurons during metamorphosis. This Drosophila melanogaster (Fruit fly) protein is Protein spindle-F.